A 274-amino-acid chain; its full sequence is NH(3)-dependent NAD(+) synthetase (274 aa).

46–53 serves as a coordination point for ATP; the sequence is GISGGQDS. Residue aspartate 52 coordinates Mg(2+). Arginine 140 contacts deamido-NAD(+). Threonine 160 contacts ATP. Glutamate 165 serves as a coordination point for Mg(2+). Residues lysine 173 and aspartate 180 each contribute to the deamido-NAD(+) site. Positions 189 and 211 each coordinate ATP. Residue 260–261 participates in deamido-NAD(+) binding; sequence HK.

This sequence belongs to the NAD synthetase family. In terms of assembly, homodimer.

The enzyme catalyses deamido-NAD(+) + NH4(+) + ATP = AMP + diphosphate + NAD(+) + H(+). It participates in cofactor biosynthesis; NAD(+) biosynthesis; NAD(+) from deamido-NAD(+) (ammonia route): step 1/1. Its function is as follows. Catalyzes the ATP-dependent amidation of deamido-NAD to form NAD. Uses ammonia as a nitrogen source. This is NH(3)-dependent NAD(+) synthetase from Lactococcus lactis subsp. cremoris (strain MG1363).